The following is a 337-amino-acid chain: Viral cathepsin (337 aa).

The first 16 residues, 1–16, serve as a signal peptide directing secretion; sequence MNKILILLLLVSAVLT. Residues 17–126 constitute a propeptide, activation peptide; the sequence is SHDQVVAVTI…VVDGPGQRQR (110 aa). 3 disulfide bridges follow: Cys147–Cys188, Cys181–Cys221, and Cys276–Cys324. Residue Cys150 is part of the active site. Active-site residues include His283 and Asn303.

Belongs to the peptidase C1 family. In terms of processing, synthesized as an inactive proenzyme and activated by proteolytic removal of the inhibitory propeptide.

The enzyme catalyses Endopeptidase of broad specificity, hydrolyzing substrates of both cathepsin L and cathepsin B.. In terms of biological role, cysteine protease that plays an essential role in host liquefaction to facilitate horizontal transmission of the virus. May participate in the degradation of foreign protein expressed by the baculovirus system. The sequence is that of Viral cathepsin (VCATH) from Mamestra configurata (bertha armyworm).